Reading from the N-terminus, the 659-residue chain is Threonine--tRNA ligase (659 aa).

Residues 1-60 enclose the TGS domain; that stretch reads MTVYLPDGKPLELPEGATAKDVARALGEGWERRAVGAIVDGELYDLLKPLPQGAKVRLLT. Catalytic stretches follow at residues 234-548 and 252-552; these read TAEE…EHFA and DHRR…GDFP. 3 residues coordinate Zn(2+): Cys349, His400, and His529.

The protein belongs to the class-II aminoacyl-tRNA synthetase family. In terms of assembly, homodimer. It depends on Zn(2+) as a cofactor.

It localises to the cytoplasm. It catalyses the reaction tRNA(Thr) + L-threonine + ATP = L-threonyl-tRNA(Thr) + AMP + diphosphate + H(+). Catalyzes the attachment of threonine to tRNA(Thr) in a two-step reaction: L-threonine is first activated by ATP to form Thr-AMP and then transferred to the acceptor end of tRNA(Thr). Also edits incorrectly charged L-seryl-tRNA(Thr). The sequence is that of Threonine--tRNA ligase from Thermus thermophilus (strain ATCC 27634 / DSM 579 / HB8).